The sequence spans 438 residues: Glycerophosphocholine cholinephosphodiesterase ENPP6 (438 aa).

A signal peptide spans 1 to 22 (MTRTLLKIYTLFILLLCRQRDA). 3 residues coordinate substrate: Asp32, Ser69, and Asn90. Residues Asp32 and Ser69 each coordinate Zn(2+). The active-site Nucleophile is Ser69. Ser69 bears the Phosphoserine mark. Cys140 and Cys152 form a disulfide bridge. Residues 162-226 (KNLTDSMENA…ILNQKIREKN (65 aa)) are a coiled coil. Residue Asn163 is glycosylated (N-linked (GlcNAc...) asparagine). Asp191 is a substrate binding site. Residues Asp191, His195, Asp238, and His239 each contribute to the Zn(2+) site. Residue His239 coordinates substrate. N-linked (GlcNAc...) asparagine glycosylation is found at Asn258, Asn287, and Asn339. Position 352 (His352) interacts with substrate. His352 is a Zn(2+) binding site. A glycan (N-linked (GlcNAc...) asparagine) is linked at Asn402. Ser415 carries the GPI-anchor amidated serine lipid modification. A propeptide spans 416-438 (AATAGASLISCCFLLLLTLTGVC) (removed in mature form).

It belongs to the nucleotide pyrophosphatase/phosphodiesterase family. Zn(2+) is required as a cofactor.

It localises to the cell membrane. The enzyme catalyses sn-glycerol 3-phosphocholine + H2O = phosphocholine + glycerol + H(+). The catalysed reaction is a 1-acyl-sn-glycero-3-phosphocholine + H2O = a 1-acyl-sn-glycerol + phosphocholine + H(+). It carries out the reaction a 1-O-alkyl-sn-glycero-3-phosphocholine + H2O = a 1-O-alkyl-sn-glycerol + phosphocholine + H(+). It catalyses the reaction 1-dodecanoyl-sn-glycero-3-phosphocholine + H2O = 1-dodecanoyl-sn-glycerol + phosphocholine + H(+). The enzyme catalyses 1-hexadecanoyl-sn-glycero-3-phosphocholine + H2O = 1-hexadecanoyl-sn-glycerol + phosphocholine + H(+). The catalysed reaction is 1-(5Z,8Z,11Z,14Z-eicosatetraenoyl)-sn-glycero-3-phosphocholine + H2O = 1-(5Z,8Z,11Z,14Z-eicosatetraenoyl)-sn-glycerol + phosphocholine + H(+). It carries out the reaction 1-tetradecanoyl-sn-glycero-3-phosphocholine + H2O = 1-tetradecanoyl-sn-glycerol + phosphocholine + H(+). It catalyses the reaction sphing-4-enine-phosphocholine + H2O = sphing-4-enine + phosphocholine + H(+). The enzyme catalyses 1-(9Z-octadecenoyl)-sn-glycero-3-phosphocholine + H2O = 1-(9Z-octadecenoyl)-sn-glycerol + phosphocholine + H(+). The catalysed reaction is 1-(9Z,12Z)-octadecadienoyl-sn-glycero-3-phosphocholine + H2O = 1-(9Z,12Z-octadecadienoyl)-sn-glycerol + phosphocholine + H(+). It carries out the reaction glycero-2-phosphocholine + H2O = phosphocholine + glycerol + H(+). Its function is as follows. Choline-specific glycerophosphodiesterase that hydrolyzes glycerophosphocholine (GPC) and lysophosphatidylcholine (LPC) and contributes to supplying choline to the cells. Has a preference for LPC with short (12:0 and 14:0) or polyunsaturated (18:2 and 20:4) fatty acids. In vitro, hydrolyzes only choline-containing lysophospholipids, such as sphingosylphosphorylcholine (SPC), platelet-activating factor (PAF) and lysoPAF, but not other lysophospholipids. The chain is Glycerophosphocholine cholinephosphodiesterase ENPP6 from Danio rerio (Zebrafish).